Here is a 148-residue protein sequence, read N- to C-terminus: uncharacterized protein (148 aa).

This is an uncharacterized protein from Schizosaccharomyces pombe (strain 972 / ATCC 24843) (Fission yeast).